The following is a 932-amino-acid chain: Protocadherin gamma-A9 (932 aa).

The first 28 residues, 1 to 28 (MAAPTKCQLRGRLVLLCSLLGMLWEARA), serve as a signal peptide directing secretion. Cadherin domains lie at 29 to 133 (SQIR…APKF), 134 to 242 (QAES…APVF), 243 to 347 (AQRI…RPEV), 348 to 452 (TITS…PPAF), 453 to 562 (SQAS…APEI), and 570 to 683 (DGST…IPAD). Residues 29–692 (SQIRYSVPEE…DLEASDLTLY (664 aa)) lie on the Extracellular side of the membrane. Asn-47 and Asn-127 each carry an N-linked (GlcNAc...) asparagine glycan. Asn-389, Asn-419, and Asn-545 each carry an N-linked (GlcNAc...) asparagine glycan. The chain crosses the membrane as a helical span at residues 693-713 (LVVAVAVVSCVFLTFVITLLA). The Cytoplasmic portion of the chain corresponds to 714–932 (LRLRHWHSSH…KKKSGKKEKK (219 aa)). 2 disordered regions span residues 803-841 (DTPLVPQAPPNTDWRFSQAQRPGTSGSQNGDDTGTWPNN) and 902-932 (ATLTNAAGKRDGKAPAGGNGNKKKSGKKEKK). Residues 816–841 (WRFSQAQRPGTSGSQNGDDTGTWPNN) show a composition bias toward polar residues. The span at 922–932 (NKKKSGKKEKK) shows a compositional bias: basic residues.

The protein localises to the cell membrane. In terms of biological role, potential calcium-dependent cell-adhesion protein. May be involved in the establishment and maintenance of specific neuronal connections in the brain. The protein is Protocadherin gamma-A9 (PCDHGA9) of Pan troglodytes (Chimpanzee).